The sequence spans 107 residues: Nucleoid-associated protein Msil_0275 (107 aa).

This sequence belongs to the YbaB/EbfC family. As to quaternary structure, homodimer.

The protein resides in the cytoplasm. It is found in the nucleoid. Binds to DNA and alters its conformation. May be involved in regulation of gene expression, nucleoid organization and DNA protection. This chain is Nucleoid-associated protein Msil_0275, found in Methylocella silvestris (strain DSM 15510 / CIP 108128 / LMG 27833 / NCIMB 13906 / BL2).